We begin with the raw amino-acid sequence, 232 residues long: Small ribosomal subunit protein uS2 (232 aa).

Belongs to the universal ribosomal protein uS2 family.

The protein is Small ribosomal subunit protein uS2 of Pelotomaculum thermopropionicum (strain DSM 13744 / JCM 10971 / SI).